A 249-amino-acid polypeptide reads, in one-letter code: 5'-nucleotidase SurE (249 aa).

Residues Asp9, Asp10, Ser40, and Asn92 each contribute to the a divalent metal cation site.

The protein belongs to the SurE nucleotidase family. A divalent metal cation serves as cofactor.

The protein resides in the cytoplasm. The enzyme catalyses a ribonucleoside 5'-phosphate + H2O = a ribonucleoside + phosphate. Nucleotidase that shows phosphatase activity on nucleoside 5'-monophosphates. This Shewanella sediminis (strain HAW-EB3) protein is 5'-nucleotidase SurE.